The primary structure comprises 635 residues: Chaperone protein DnaK (635 aa).

Phosphothreonine; by autocatalysis is present on Thr198. Residues 597–635 (LYEQDQANNERHDTPETEKAEGDNVVDAEFQEIDDQDKK) are disordered. Basic and acidic residues predominate over residues 604–618 (NNERHDTPETEKAEG). The span at 620–635 (NVVDAEFQEIDDQDKK) shows a compositional bias: acidic residues.

The protein belongs to the heat shock protein 70 family.

In terms of biological role, acts as a chaperone. The protein is Chaperone protein DnaK of Zymomonas mobilis subsp. mobilis (strain ATCC 31821 / ZM4 / CP4).